The sequence spans 154 residues: Ribonuclease H (154 aa).

Positions 1 to 142 (MRKQVEIFTD…CDELARAAAG (142 aa)) constitute an RNase H type-1 domain. Mg(2+) contacts are provided by Asp-10, Glu-48, Asp-70, and Asp-134.

This sequence belongs to the RNase H family. In terms of assembly, monomer. It depends on Mg(2+) as a cofactor.

It is found in the cytoplasm. It carries out the reaction Endonucleolytic cleavage to 5'-phosphomonoester.. Functionally, endonuclease that specifically degrades the RNA of RNA-DNA hybrids. In Pectobacterium carotovorum subsp. carotovorum (strain PC1), this protein is Ribonuclease H.